A 527-amino-acid polypeptide reads, in one-letter code: Probable feruloyl esterase B-2 (527 aa).

The N-terminal stretch at 1–19 (MAPIHYLLPIITLGSAALA) is a signal peptide. 2 disulfides stabilise this stretch: C28/C75 and C63/C114. 5 N-linked (GlcNAc...) asparagine glycosylation sites follow: N53, N85, N98, N138, and N180. 4 cysteine pairs are disulfide-bonded: C187–C441, C256–C273, C282–C291, and C503–C525. S188 functions as the Acyl-ester intermediate in the catalytic mechanism. Ca(2+) is bound by residues D257, D260, A262, D264, and I266. Residues N311 and N355 are each glycosylated (N-linked (GlcNAc...) asparagine). Residues D400 and H440 each act as charge relay system in the active site. N-linked (GlcNAc...) asparagine glycosylation is present at N516.

Belongs to the tannase family.

It is found in the secreted. It carries out the reaction feruloyl-polysaccharide + H2O = ferulate + polysaccharide.. Functionally, involved in degradation of plant cell walls. Hydrolyzes the feruloyl-arabinose ester bond in arabinoxylans as well as the feruloyl-galactose and feruloyl-arabinose ester bonds in pectin. The polypeptide is Probable feruloyl esterase B-2 (faeB-2) (Aspergillus terreus (strain NIH 2624 / FGSC A1156)).